Consider the following 295-residue polypeptide: CRISPR system Cmr endoribonuclease Cmr4 (295 aa).

This sequence belongs to the CRISPR system Cmr4 family. In terms of assembly, forms oligomers in isolation. Part of the type III-B Cmr ribonucleoprotein (RNP) complex, an elongated RNP with Cmr2 and Cmr3 as the base, with Cmr4 and Cmr5 forming a helical core along the mature crRNA (39 or 45 nt in length), while the complex is capped by Cmr6 and Cmr1. The 5' end of the crRNA is bound to Cmr2 and Cmr3, while Cmr6 and a Cmr1 subunit (Cmr1-1 or Cmr1-2) cap the 3' end of the crRNA. The target RNA lies anti-parallel to the crRNA, with its 5' end near Cmr1 and Cmr6 and its 3' end near Cmr2 and Cmr3; major target RNA cleavage occurs nears the junction of Cmr1/Cmr6 and Cmr4/Cmr5, with minor cleavage occurring at 6 nt intervals which coincide with the proposed spacing of Cmr4 subunits. Interacts with Cmr5. Interacts with Cmr2, Cmr3, Cmr5 and Cmr6.

It localises to the cytoplasm. CRISPR (clustered regularly interspaced short palindromic repeat), is an adaptive immune system that provides protection against mobile genetic elements (viruses, transposable elements and conjugative plasmids). CRISPR clusters contain sequences complementary to antecedent mobile elements and target invading nucleic acids. CRISPR clusters are transcribed and processed into CRISPR RNA (crRNA), formerly called psiRNA (prokaryotic silencing) in this organism. Part of the Cmr ribonucleoprotein complex which has divalent cation-dependent endoribonuclease activity specific for ssRNA complementary to the crRNA (target RNA), generating 5' hydroxy- and 3' phosphate or 2'-3' cyclic phosphate termini. This is probably the subunit that cleaves the target RNA. Cmr complex does not cleave ssDNA complementary to the crRNA. Cleavage of target RNA is guided by the crRNA; substrate cleavage occurs a fixed distance (14 nt) from the 3' end of the crRNA. In vitro reconstitution shows Cmr1-2 and Cmr5 are not absolutely necessary for target cleavage. This is CRISPR system Cmr endoribonuclease Cmr4 from Pyrococcus furiosus (strain ATCC 43587 / DSM 3638 / JCM 8422 / Vc1).